The sequence spans 411 residues: Acetate kinase (411 aa).

Residue N7 coordinates Mg(2+). K14 is an ATP binding site. R94 provides a ligand contact to substrate. D151 (proton donor/acceptor) is an active-site residue. Residues 211-215 (HLGNG), 285-287 (DMR), and 333-337 (GIGEN) contribute to the ATP site. E387 is a Mg(2+) binding site.

It belongs to the acetokinase family. In terms of assembly, homodimer. Mg(2+) serves as cofactor. Requires Mn(2+) as cofactor.

Its subcellular location is the cytoplasm. It catalyses the reaction acetate + ATP = acetyl phosphate + ADP. It functions in the pathway metabolic intermediate biosynthesis; acetyl-CoA biosynthesis; acetyl-CoA from acetate: step 1/2. Its function is as follows. Catalyzes the formation of acetyl phosphate from acetate and ATP. Can also catalyze the reverse reaction. The sequence is that of Acetate kinase from Syntrophobacter fumaroxidans (strain DSM 10017 / MPOB).